We begin with the raw amino-acid sequence, 164 residues long: Dehydrin Rab16B (164 aa).

A disordered region spans residues 1–164 (MENYQGQHGY…KIKEKLPGQH (164 aa)). Residues 25–53 (GQYGGGATAPGGGHGAMGMGGHAGAGAGG) show a composition bias toward gly residues. Positions 107–117 (GNNQQQQQMMG) are enriched in low complexity. Positions 147–164 (GEKKGFMDKIKEKLPGQH) are enriched in basic and acidic residues.

It belongs to the plant dehydrin family.

The chain is Dehydrin Rab16B (RAB16B) from Oryza sativa subsp. indica (Rice).